Reading from the N-terminus, the 433-residue chain is Eukaryotic peptide chain release factor subunit 1 (433 aa).

The residue at position 182 (Gln-182) is an N5-methylglutamine. Ser-425 carries the post-translational modification Phosphoserine.

The protein belongs to the eukaryotic release factor 1 family. In terms of assembly, component of the eRF1-eRF3-GTP ternary complex, composed of sup45/eRF1, sup35/eRF3 and GTP.

It localises to the cytoplasm. In terms of biological role, component of the eRF1-eRF3-GTP ternary complex, a ternary complex that mediates translation termination in response to the termination codons. The eRF1-eRF3-GTP complex binds to a stop codon in the ribosomal A-site. Sup45/eRF1 is responsible for stop codon recognition and inducing hydrolysis of peptidyl-tRNA. Following GTP hydrolysis by sup35/eRF3, sup35/eRF3 dissociates, permitting sup45/eRF1 to accommodate fully in the A-site. The sequence is that of Eukaryotic peptide chain release factor subunit 1 (sup45) from Schizosaccharomyces pombe (strain 972 / ATCC 24843) (Fission yeast).